A 2128-amino-acid chain; its full sequence is MEGPSRVYLFGDQTSDIEAGLRRLLQAKNSTIVQSFFQQCFHAIRQEIAKLPPSHRKLFPRFTSIVDLLSRSRESGPSPVLESALTCIYQLGCFIHFYGDLGHDYPTPSNSHLVGLCTGVLSCTAVSCARNVGELIPAAVESVVIALRLGICVFRVRELVDSADSESTCWSALVSGISEAEASHLIDEYSSKKATPPSSKPYISAVSSNGVTVSAPPTVLDEFVETCISKNYKPVKAPIHGPYHAPHLYDDKDIDRILQQSSALEGLTGCSPVIPIISSNTGKPIKAKSIKDLFKVALEEILLRRLCWDKVTESCTSVCKTGTNHSCKLFPISSSATQSLFTVLKKAGVSISLETGVGEIATNPEMRNLTGKAENSKIAIIGMSGRFPDSDGTESFWNLLYKGLDVHRKVPADRWDVDAHVDMTGSKRNTSKVAYGCWINEPGLFDPRFFNMSPREALQADPAQRLALLTAYEALEMAGFIPDSSPSTQRDRVGIFYGMTSDDYREINSGQDIDTYFIPGGNRAFTPGRINYYFKFSGPSVSVDTACSSSLAAIHMACNSIWRNDCDAAITGGVNILTNPDNHAGLDRGHFLSTTGNCNTFDDGADGYCRADGVGSIVLKRLEDAEADNDPILAVINGAYTNHSAEAVSITRPHVGAQAFIFNKLLNDANIDPKDVSYVEMHGTGTQAGDAVEMQSVLDVFAPDYRRGPGQSLHIGSAKANIGHGESASGVTALVKVLLMMRENMIPPHCGIKTKINSNFPTDLAKRNVHIAFQPTPWNRPASGKRRTFVNNFSAAGGNTALLLEDAPIPERQGQDPRSFHLVSVSARSQSALKNNVEALVKYIDSQGKSFGVKETEFLPNLAYTTTARRIHHPFRVTAVGANLQSLRDSLHGALHRETYTPVPSTAPGIGFVFTGQGAQYSGMGKELYRSCFQFRTTIEHFDCIARSQGLPSILPLVDGSVAVEELSPVVVQVGTTCVQMALVNYWTALGVKPAFIIGHSLGDYAALNTAGVLSTSDTIYLCGRRAQLLTKECKIGTHSMLAIKASLAEVKHFLRDELHEVSCVNAPAETVVSGLVADIDELAQKCSTEGLKSTKLKVPYAFHSSQVDPILEAFEDIAQGVTFHKPTTPFVSALFGEVITDANWECLGPKYLRDHCRKTVNFLGGVEATRHAKLTNDKTLWVEIGSHTICSGMIKATLGPQVTTVASLRREEDTWKVLSNSLASLHLAGIDINWKQYHQDFSSSLQVLRLPAYKWDLKNYWIPYTNNFCLSKGAPVATVAAGPQHEYLTTAAQKVIETRSDGATATVVIENDIADPELNRVIQGHKVNGTALCPSSLYADISQTLAEYLIKKYKPEYDGLGLDVCEVTVPRPLIAKGGQQLFRVSATADWAEKKTTLQIYSVTAEGKKTADHATCTVRFFDCAAAEAEWKRVSYLVKRSIDRLHDIAENGDAHRLGRGMVYKLFAALVDYDDNFKSIREVILDSEQHEATARVKFQAPQGNFHRNPFWIDSFGHLSGFIMNASDATDSKNQVFVNHGWDSMRCLKKFSPDVTYRTYVRMQPWKDSIWAGDVYVFDGDDIVAVYGAVKFQALSRKILDTVLPPSRASAPAPAKPAAKPSAPSLVKRALTILAEEVGLSESEITDDLVFADYGVDSLLSLTVTGRYREELDIDLESSIFIDQPTVKDFKQFLAPMSQGEASDGSTSDPESSSSFNGGSSTDESSAGSPVSSPPNEKVTQVEQHATIKEIRAILADEIGVTEEELKDDENLGEMGMDSLLSLTVLGRIRETLDLDLPGEFFIENQTLNDVEDALGLKPKAAPAPAPAPAPVPAPVSAPILKEPVPNANSTIMARASPHPRSTSILLQGNPKTATKTLFLFPDGSGSATSYATIPGVSPDVCVYGLNCPYMKTPEKLKYPLAEMTFPYLAEIRRRQPKGPYNFGGWSAGGICAYDAARYLILEEGEQVDRLLLLDSPFPIGLEKLPTRLYGFINSMGLFGEGNKAPPAWLLPHFLAFIDSLDTYKAVPLPFDDPKWAKKMPKTFMVWAKDGICSKPDDPWPEPDPDGKPDTREMVWLLKNRTDMGPNKWDTLVGPQNVGGITVIEGANHFTMTLGPKAKELGSFIGNAMAN.

The interval 8 to 244 (YLFGDQTSDI…VKAPIHGPYH (237 aa)) is N-terminal acylcarrier protein transacylase domain (SAT). Positions 375–806 (NSKIAIIGMS…GGNTALLLED (432 aa)) constitute a Ketosynthase family 3 (KS3) domain. Active-site for beta-ketoacyl synthase activity residues include Cys547, His682, and His724. Positions 912–1232 (FVFTGQGAQY…LASLHLAGID (321 aa)) are malonyl-CoA:ACP transacylase (MAT) domain. Residue Ser1001 is the For acyl/malonyl transferase activity of the active site. An N-terminal hotdog fold region spans residues 1286 to 1425 (HEYLTTAAQK…CTVRFFDCAA (140 aa)). One can recognise a PKS/mFAS DH domain in the interval 1286–1598 (HEYLTTAAQK…FQALSRKILD (313 aa)). The product template (PT) domain stretch occupies residues 1290-1603 (TTAAQKVIET…RKILDTVLPP (314 aa)). Catalysis depends on His1326, which acts as the Proton acceptor; for dehydratase activity. Residues 1452 to 1598 (DAHRLGRGMV…FQALSRKILD (147 aa)) form a C-terminal hotdog fold region. Residue Asp1511 is the Proton donor; for dehydratase activity of the active site. In terms of domain architecture, Carrier 1 spans 1618-1695 (PSAPSLVKRA…DFKQFLAPMS (78 aa)). Ser1655 is modified (O-(pantetheine 4'-phosphoryl)serine). The disordered stretch occupies residues 1695–1740 (SQGEASDGSTSDPESSSSFNGGSSTDESSAGSPVSSPPNEKVTQVE). Over residues 1700-1723 (SDGSTSDPESSSSFNGGSSTDESS) the composition is skewed to low complexity. Polar residues predominate over residues 1724–1740 (AGSPVSSPPNEKVTQVE). The Carrier 2 domain maps to 1739–1816 (VEQHATIKEI…DVEDALGLKP (78 aa)). At Ser1776 the chain carries O-(pantetheine 4'-phosphoryl)serine. The tract at residues 1854–2126 (SPHPRSTSIL…ELGSFIGNAM (273 aa)) is claisen cyclase domain. The active-site For Claisen cyclase activity is the Ser1944.

The catalysed reaction is 6 malonyl-CoA + acetyl-CoA + 6 H(+) = naphtopyrone YWA1 + 6 CO2 + 7 CoA + H2O. It functions in the pathway secondary metabolite biosynthesis. Non-reducing polyketide synthase; part of the gene cluster that mediates the biosynthesis of aurasperone B, a dimeric gamma-naphthopyrone. The first step in the biosynthesis of aurasperone B is the production of gamma-naphthopyrone precursor YWA1 by the non-reducing polyketide synthase albA, via condensation of one acetyl-CoA starter unit with 6 malonyl-CoA units. YWA1 is then methylated by aunE at position C-6 to yield foncesin which is further methylated at position C-8 by aunD to produce fonsecin B. A key enzyme in the biosynthetic pathway is the cytochrome P450 monooxygenase aunB which catalyzes the oxidative dimerization of fonsecin B to aurasperone B. AunB also catalyzes the oxidative dimerization of rubrofusarin B into aurasperone A. This Aspergillus niger (strain ATCC 1015 / CBS 113.46 / FGSC A1144 / LSHB Ac4 / NCTC 3858a / NRRL 328 / USDA 3528.7) protein is Non-reducing polyketide synthase albA.